A 926-amino-acid polypeptide reads, in one-letter code: Probable zinc protease PqqL (926 aa).

Residue H79 coordinates Zn(2+). Residue E82 is the Proton acceptor of the active site. Zn(2+)-binding residues include H83 and E159.

This sequence belongs to the peptidase M16 family. Requires Zn(2+) as cofactor.

This chain is Probable zinc protease PqqL (pqqL), found in Haemophilus influenzae (strain ATCC 51907 / DSM 11121 / KW20 / Rd).